A 439-amino-acid chain; its full sequence is Serine--tRNA ligase (439 aa).

242-244 contributes to the L-serine binding site; the sequence is TAE. Residue 273–275 coordinates ATP; the sequence is RQE. Residue Glu-296 participates in L-serine binding. 360–363 contributes to the ATP binding site; it reads EISS. Ser-396 is a binding site for L-serine.

It belongs to the class-II aminoacyl-tRNA synthetase family. Type-1 seryl-tRNA synthetase subfamily. As to quaternary structure, homodimer. The tRNA molecule binds across the dimer.

Its subcellular location is the cytoplasm. The enzyme catalyses tRNA(Ser) + L-serine + ATP = L-seryl-tRNA(Ser) + AMP + diphosphate + H(+). It carries out the reaction tRNA(Sec) + L-serine + ATP = L-seryl-tRNA(Sec) + AMP + diphosphate + H(+). Its pathway is aminoacyl-tRNA biosynthesis; selenocysteinyl-tRNA(Sec) biosynthesis; L-seryl-tRNA(Sec) from L-serine and tRNA(Sec): step 1/1. Its function is as follows. Catalyzes the attachment of serine to tRNA(Ser). Is also able to aminoacylate tRNA(Sec) with serine, to form the misacylated tRNA L-seryl-tRNA(Sec), which will be further converted into selenocysteinyl-tRNA(Sec). In Oenococcus oeni (strain ATCC BAA-331 / PSU-1), this protein is Serine--tRNA ligase.